The primary structure comprises 464 residues: Glutamate--tRNA ligase (464 aa).

The short motif at 8-18 (PSPTGYMHLGN) is the 'HIGH' region element. The Zn(2+) site is built by Cys96, Cys98, Cys123, and His125. A 'KMSKS' region motif is present at residues 240–244 (KLSKR). Lys243 provides a ligand contact to ATP.

It belongs to the class-I aminoacyl-tRNA synthetase family. Glutamate--tRNA ligase type 1 subfamily. In terms of assembly, monomer. The cofactor is Zn(2+).

It is found in the cytoplasm. The enzyme catalyses tRNA(Glu) + L-glutamate + ATP = L-glutamyl-tRNA(Glu) + AMP + diphosphate. In terms of biological role, catalyzes the attachment of glutamate to tRNA(Glu) in a two-step reaction: glutamate is first activated by ATP to form Glu-AMP and then transferred to the acceptor end of tRNA(Glu). In Hydrogenobaculum sp. (strain Y04AAS1), this protein is Glutamate--tRNA ligase.